The chain runs to 221 residues: Putative gene 53 protein (221 aa).

This Bacillus phage SP01 (Bacteriophage SP01) protein is Putative gene 53 protein (53).